Consider the following 296-residue polypeptide: Elongation factor Ts (296 aa).

The involved in Mg(2+) ion dislocation from EF-Tu stretch occupies residues 82–85 (TDFV).

The protein belongs to the EF-Ts family.

It localises to the cytoplasm. Associates with the EF-Tu.GDP complex and induces the exchange of GDP to GTP. It remains bound to the aminoacyl-tRNA.EF-Tu.GTP complex up to the GTP hydrolysis stage on the ribosome. In Aromatoleum aromaticum (strain DSM 19018 / LMG 30748 / EbN1) (Azoarcus sp. (strain EbN1)), this protein is Elongation factor Ts.